The following is an 819-amino-acid chain: DNA topoisomerase 4 subunit A (819 aa).

A Topo IIA-type catalytic domain is found at 30–496; it reads LPDIRDGLKP…QIIEIDTASL (467 aa). Tyr118 serves as the catalytic O-(5'-phospho-DNA)-tyrosine intermediate.

It belongs to the type II topoisomerase GyrA/ParC subunit family. ParC type 2 subfamily. Heterotetramer composed of ParC and ParE.

It localises to the cell membrane. It catalyses the reaction ATP-dependent breakage, passage and rejoining of double-stranded DNA.. Its function is as follows. Topoisomerase IV is essential for chromosome segregation. It relaxes supercoiled DNA. Performs the decatenation events required during the replication of a circular DNA molecule. In Streptococcus pyogenes serotype M6 (strain ATCC BAA-946 / MGAS10394), this protein is DNA topoisomerase 4 subunit A.